Reading from the N-terminus, the 284-residue chain is Nucleotide-binding protein NMCC_0698 (284 aa).

ATP is bound at residue 8–15 (GLSGSGKS). A GTP-binding site is contributed by 58-61 (DVRS).

Belongs to the RapZ-like family.

Displays ATPase and GTPase activities. The sequence is that of Nucleotide-binding protein NMCC_0698 from Neisseria meningitidis serogroup C (strain 053442).